Here is a 249-residue protein sequence, read N- to C-terminus: Adenosylcobinamide-GDP ribazoletransferase (249 aa).

A run of 7 helical transmembrane segments spans residues 29-49 (LYWF…CAWL), 50-70 (PLSI…GFIV), 104-124 (VGSF…VAIL), 131-151 (AFAL…LLAA), 165-185 (GFVG…SLMM), 194-214 (PFLL…IGFL), and 226-246 (VLGA…GVAF).

The protein belongs to the CobS family. It depends on Mg(2+) as a cofactor.

The protein resides in the cell inner membrane. The catalysed reaction is alpha-ribazole + adenosylcob(III)inamide-GDP = adenosylcob(III)alamin + GMP + H(+). The enzyme catalyses alpha-ribazole 5'-phosphate + adenosylcob(III)inamide-GDP = adenosylcob(III)alamin 5'-phosphate + GMP + H(+). Its pathway is cofactor biosynthesis; adenosylcobalamin biosynthesis; adenosylcobalamin from cob(II)yrinate a,c-diamide: step 7/7. In terms of biological role, joins adenosylcobinamide-GDP and alpha-ribazole to generate adenosylcobalamin (Ado-cobalamin). Also synthesizes adenosylcobalamin 5'-phosphate from adenosylcobinamide-GDP and alpha-ribazole 5'-phosphate. This Chlorobium phaeovibrioides (strain DSM 265 / 1930) (Prosthecochloris vibrioformis (strain DSM 265)) protein is Adenosylcobinamide-GDP ribazoletransferase.